A 257-amino-acid chain; its full sequence is Thiazole synthase (257 aa).

Lysine 96 serves as the catalytic Schiff-base intermediate with DXP. 1-deoxy-D-xylulose 5-phosphate-binding positions include glycine 157, 184–185 (AG), and 206–207 (NT).

The protein belongs to the ThiG family. As to quaternary structure, homotetramer. Forms heterodimers with either ThiH or ThiS.

The protein localises to the cytoplasm. It catalyses the reaction [ThiS sulfur-carrier protein]-C-terminal-Gly-aminoethanethioate + 2-iminoacetate + 1-deoxy-D-xylulose 5-phosphate = [ThiS sulfur-carrier protein]-C-terminal Gly-Gly + 2-[(2R,5Z)-2-carboxy-4-methylthiazol-5(2H)-ylidene]ethyl phosphate + 2 H2O + H(+). The protein operates within cofactor biosynthesis; thiamine diphosphate biosynthesis. Functionally, catalyzes the rearrangement of 1-deoxy-D-xylulose 5-phosphate (DXP) to produce the thiazole phosphate moiety of thiamine. Sulfur is provided by the thiocarboxylate moiety of the carrier protein ThiS. In vitro, sulfur can be provided by H(2)S. The sequence is that of Thiazole synthase from Rhizobium rhizogenes (strain K84 / ATCC BAA-868) (Agrobacterium radiobacter).